The following is a 156-amino-acid chain: Small ribosomal subunit protein uS7 (156 aa).

This sequence belongs to the universal ribosomal protein uS7 family. In terms of assembly, part of the 30S ribosomal subunit. Contacts proteins S9 and S11.

Functionally, one of the primary rRNA binding proteins, it binds directly to 16S rRNA where it nucleates assembly of the head domain of the 30S subunit. Is located at the subunit interface close to the decoding center, probably blocks exit of the E-site tRNA. The chain is Small ribosomal subunit protein uS7 from Geobacillus sp. (strain WCH70).